A 101-amino-acid chain; its full sequence is Small ribosomal subunit protein uS14 (101 aa).

It belongs to the universal ribosomal protein uS14 family. Part of the 30S ribosomal subunit. Contacts proteins S3 and S10.

In terms of biological role, binds 16S rRNA, required for the assembly of 30S particles and may also be responsible for determining the conformation of the 16S rRNA at the A site. In Methylorubrum extorquens (strain PA1) (Methylobacterium extorquens), this protein is Small ribosomal subunit protein uS14.